The chain runs to 404 residues: Nicotinate phosphoribosyltransferase (404 aa).

Histidine 224 is modified (phosphohistidine; by autocatalysis).

This sequence belongs to the NAPRTase family. Post-translationally, transiently phosphorylated on a His residue during the reaction cycle. Phosphorylation strongly increases the affinity for substrates and increases the rate of nicotinate D-ribonucleotide production. Dephosphorylation regenerates the low-affinity form of the enzyme, leading to product release.

The catalysed reaction is nicotinate + 5-phospho-alpha-D-ribose 1-diphosphate + ATP + H2O = nicotinate beta-D-ribonucleotide + ADP + phosphate + diphosphate. Its pathway is cofactor biosynthesis; NAD(+) biosynthesis; nicotinate D-ribonucleotide from nicotinate: step 1/1. Its function is as follows. Catalyzes the synthesis of beta-nicotinate D-ribonucleotide from nicotinate and 5-phospho-D-ribose 1-phosphate at the expense of ATP. In Photorhabdus laumondii subsp. laumondii (strain DSM 15139 / CIP 105565 / TT01) (Photorhabdus luminescens subsp. laumondii), this protein is Nicotinate phosphoribosyltransferase.